The primary structure comprises 316 residues: Probable cell division protein WhiA (316 aa).

A DNA-binding region (H-T-H motif) is located at residues 275 to 309 (TLKELGEMVASGKISKSGINHRLRKLDEIAEQLRT).

The protein belongs to the WhiA family.

Its subcellular location is the cytoplasm. It localises to the nucleoid. Its function is as follows. Involved in cell division and chromosome segregation. May influence the activity of FtsZ. Binds DNA, but does not seem to function as a transcription factor. This is Probable cell division protein WhiA from Bacillus subtilis (strain 168).